Here is a 309-residue protein sequence, read N- to C-terminus: tRNA pseudouridine synthase B (309 aa).

D51 (nucleophile) is an active-site residue.

The protein belongs to the pseudouridine synthase TruB family. Type 1 subfamily.

It catalyses the reaction uridine(55) in tRNA = pseudouridine(55) in tRNA. Responsible for synthesis of pseudouridine from uracil-55 in the psi GC loop of transfer RNAs. In Coxiella burnetii (strain RSA 331 / Henzerling II), this protein is tRNA pseudouridine synthase B.